The sequence spans 251 residues: 5-oxoprolinase subunit A (251 aa).

Belongs to the LamB/PxpA family. Forms a complex composed of PxpA, PxpB and PxpC.

It catalyses the reaction 5-oxo-L-proline + ATP + 2 H2O = L-glutamate + ADP + phosphate + H(+). Its function is as follows. Catalyzes the cleavage of 5-oxoproline to form L-glutamate coupled to the hydrolysis of ATP to ADP and inorganic phosphate. The sequence is that of 5-oxoprolinase subunit A from Vibrio parahaemolyticus serotype O3:K6 (strain RIMD 2210633).